Reading from the N-terminus, the 133-residue chain is Probable non-specific lipid-transfer protein 2 (133 aa).

The N-terminal stretch at 1–31 (MRTVSMAALVVIAAALAWTSSAEPAPAPAPG) is a signal peptide. 4 cysteine pairs are disulfide-bonded: cysteine 35–cysteine 83, cysteine 45–cysteine 60, cysteine 61–cysteine 106, and cysteine 81–cysteine 121.

Belongs to the plant LTP family.

Its function is as follows. Plant non-specific lipid-transfer proteins transfer phospholipids as well as galactolipids across membranes. May play a role in wax or cutin deposition in the cell walls of expanding epidermal cells and certain secretory tissues. The protein is Probable non-specific lipid-transfer protein 2 of Parietaria judaica (Pellitory-of-the-wall).